The primary structure comprises 440 residues: Ferreportin (440 aa).

The Cytoplasmic portion of the chain corresponds to 1–8 (MKVQSLLR). Residues 9-38 (IETQLLLGRLLTRSGDQAWDFVVPFALLVI) traverse the membrane as a helical segment. D24 contributes to the Ca(2+) binding site. At 39–42 (FPGK) the chain is on the extracellular side. The chain crosses the membrane as a helical span at residues 43–69 (LQVAAFYYLIVKIGTFLLTPSSGKWID). Residues 70-72 (THP) are Cytoplasmic-facing. Residues 73–103 (RIQVVKWGVWLQFFAILAGMVFFGMLDGLVR) form a helical membrane-spanning segment. Ca(2+) is bound at residue Q84. Over 104-109 (AGGRES) the chain is Extracellular. Residues 110–145 (WLLSVLFIALALSGVMASLGSQITDISVGNDLAPSL) traverse the membrane as a helical segment. The Cytoplasmic segment spans residues 146-147 (VA). Residues 148–176 (PEKLTHFNSWLRRIDLATEVGAPILAGAL) traverse the membrane as a helical segment. Residues 177–186 (FAFHPEQLPL) are Extracellular-facing. A helical membrane pass occupies residues 187-213 (AGLFLIGLWNLVSFVPEYFLLRNVIQR). N196 and E203 together coordinate Ca(2+). The Cytoplasmic segment spans residues 214 to 242 (SGLKIKVLTEAQSWKDTFHINLRGSFSDP). Residues 243–271 (IFWLILSYALLWLSVLSPHGVLLAAYLKD) traverse the membrane as a helical segment. The Extracellular portion of the chain corresponds to 272–276 (EMRLP). The chain crosses the membrane as a helical span at residues 277–304 (ETEIGLFRGLGAVFGLISTVSFPYLVRR). The Cytoplasmic segment spans residues 305–306 (LG). Residues 307-329 (LISSSRWHLGFQGVTLGIAVTAF) form a helical membrane-spanning segment. At 330 to 335 (AMGSTA) the chain is on the extracellular side. Residues 336–365 (SVYVFLGCILLSRVGLYGFSNGEFELRQRL) traverse the membrane as a helical segment. Residues 366 to 370 (IPEGR) are Cytoplasmic-facing. Residues 371 to 395 (RGELNSLSSLTTTSATLILFSAGSL) form a helical membrane-spanning segment. Residues 396–398 (LPQ) lie on the Extracellular side of the membrane. The chain crosses the membrane as a helical span at residues 399-424 (TEDFKYLVYVSLAAVLLANVVFIKWS). At 425–440 (SRQGVVTSGAAEPVES) the chain is on the cytoplasmic side.

This sequence belongs to the ferroportin (FP) (TC 2.A.100) family. It depends on Ca(2+) as a cofactor.

It localises to the cell membrane. Iron transpoter that exports Fe(2+) from the cell. Also binds to Co(2+) and Ni(2+). May act as a multivalent divalent metal transporter. The transporter is composed of 12 transmembrane (TM) helices organized into N-terminal (TM1-6) and C-terminal (TM7-12) domains. The substrate-binding site is formed at the interface of the two domains and is alternately accessible from either side of the membrane. The transport cycle is viewed as a series of ligand-induced conformational changes that include open outward and open inward states. The chain is Ferreportin (slc39) from Bdellovibrio bacteriovorus (strain ATCC 15356 / DSM 50701 / NCIMB 9529 / HD100).